We begin with the raw amino-acid sequence, 339 residues long: Ferrochelatase (339 aa).

Fe cation is bound by residues H202 and E283.

This sequence belongs to the ferrochelatase family.

It localises to the cytoplasm. The catalysed reaction is heme b + 2 H(+) = protoporphyrin IX + Fe(2+). Its pathway is porphyrin-containing compound metabolism; protoheme biosynthesis; protoheme from protoporphyrin-IX: step 1/1. In terms of biological role, catalyzes the ferrous insertion into protoporphyrin IX. This chain is Ferrochelatase, found in Psychrobacter cryohalolentis (strain ATCC BAA-1226 / DSM 17306 / VKM B-2378 / K5).